Reading from the N-terminus, the 246-residue chain is UDP-N-acetyl-D-mannosaminuronic acid transferase (246 aa).

It belongs to the glycosyltransferase 26 family.

The enzyme catalyses UDP-N-acetyl-alpha-D-mannosaminouronate + N-acetyl-alpha-D-glucosaminyl-di-trans,octa-cis-undecaprenyl diphosphate = beta-D-ManNAcA-(1-&gt;4)-alpha-D-GlcNAc-di-trans,octa-cis-undecaprenyl diphosphate + UDP + H(+). It participates in bacterial outer membrane biogenesis; enterobacterial common antigen biosynthesis. In terms of biological role, catalyzes the synthesis of Und-PP-GlcNAc-ManNAcA (Lipid II), the second lipid-linked intermediate involved in enterobacterial common antigen (ECA) synthesis. This Escherichia coli O127:H6 (strain E2348/69 / EPEC) protein is UDP-N-acetyl-D-mannosaminuronic acid transferase.